The primary structure comprises 343 residues: Protein-glutamate methylesterase/protein-glutamine glutaminase 2 (343 aa).

The Response regulatory domain occupies 5 to 122 (KVLVVDDSAI…SVGDMSGQLV (118 aa)). At Asp-56 the chain carries 4-aspartylphosphate. Residues 154–343 (AETSNKVIAI…SIADEIVRMV (190 aa)) enclose the CheB-type methylesterase domain. Catalysis depends on residues Ser-166, His-192, and Asp-288.

The protein belongs to the CheB family. Phosphorylated by CheA. Phosphorylation of the N-terminal regulatory domain activates the methylesterase activity.

The protein resides in the cytoplasm. It catalyses the reaction [protein]-L-glutamate 5-O-methyl ester + H2O = L-glutamyl-[protein] + methanol + H(+). The catalysed reaction is L-glutaminyl-[protein] + H2O = L-glutamyl-[protein] + NH4(+). In terms of biological role, involved in chemotaxis. Part of a chemotaxis signal transduction system that modulates chemotaxis in response to various stimuli. Catalyzes the demethylation of specific methylglutamate residues introduced into the chemoreceptors (methyl-accepting chemotaxis proteins or MCP) by CheR. Also mediates the irreversible deamidation of specific glutamine residues to glutamic acid. The polypeptide is Protein-glutamate methylesterase/protein-glutamine glutaminase 2 (Syntrophus aciditrophicus (strain SB)).